The primary structure comprises 350 residues: Anthranilate phosphoribosyltransferase (350 aa).

5-phospho-alpha-D-ribose 1-diphosphate-binding positions include Gly82, Gly85–Asp86, Ser90, Asn92–Thr95, Lys110–Gly118, and Gly122. Gly82 contacts anthranilate. Mg(2+) is bound at residue Ser94. Residue Asn113 coordinates anthranilate. Residue Arg168 coordinates anthranilate. Residues Asp232 and Glu233 each contribute to the Mg(2+) site.

It belongs to the anthranilate phosphoribosyltransferase family. In terms of assembly, homodimer. Requires Mg(2+) as cofactor.

It catalyses the reaction N-(5-phospho-beta-D-ribosyl)anthranilate + diphosphate = 5-phospho-alpha-D-ribose 1-diphosphate + anthranilate. Its pathway is amino-acid biosynthesis; L-tryptophan biosynthesis; L-tryptophan from chorismate: step 2/5. Its function is as follows. Catalyzes the transfer of the phosphoribosyl group of 5-phosphorylribose-1-pyrophosphate (PRPP) to anthranilate to yield N-(5'-phosphoribosyl)-anthranilate (PRA). The chain is Anthranilate phosphoribosyltransferase from Methanothermobacter marburgensis (strain ATCC BAA-927 / DSM 2133 / JCM 14651 / NBRC 100331 / OCM 82 / Marburg) (Methanobacterium thermoautotrophicum).